Here is a 349-residue protein sequence, read N- to C-terminus: UDP-N-acetylenolpyruvoylglucosamine reductase (349 aa).

Positions 25–197 constitute an FAD-binding PCMH-type domain; it reads GIAATARYAA…VAVTFRLPKR (173 aa). Arg-173 is an active-site residue. Residue Ser-249 is the Proton donor of the active site. The active site involves Glu-345.

This sequence belongs to the MurB family. It depends on FAD as a cofactor.

The protein localises to the cytoplasm. The enzyme catalyses UDP-N-acetyl-alpha-D-muramate + NADP(+) = UDP-N-acetyl-3-O-(1-carboxyvinyl)-alpha-D-glucosamine + NADPH + H(+). It participates in cell wall biogenesis; peptidoglycan biosynthesis. Functionally, cell wall formation. This is UDP-N-acetylenolpyruvoylglucosamine reductase from Burkholderia vietnamiensis (strain G4 / LMG 22486) (Burkholderia cepacia (strain R1808)).